A 417-amino-acid polypeptide reads, in one-letter code: Probable metalloprotease arx1 (417 aa).

It belongs to the peptidase M24 family. Component of the nucleoplasmic and cytoplasmic pre-60S ribosomal particles.

The protein resides in the cytoplasm. Its subcellular location is the nucleus. Functionally, probable metalloprotease involved in proper assembly of pre-ribosomal particles during the biogenesis of the 60S ribosomal subunit. Accompanies the pre-60S particles to the cytoplasm. The chain is Probable metalloprotease arx1 (arx1) from Schizosaccharomyces pombe (strain 972 / ATCC 24843) (Fission yeast).